The primary structure comprises 147 residues: D-aminoacyl-tRNA deacylase (147 aa).

A Gly-cisPro motif, important for rejection of L-amino acids motif is present at residues G136 to P137.

Belongs to the DTD family. As to quaternary structure, homodimer.

It is found in the cytoplasm. It catalyses the reaction glycyl-tRNA(Ala) + H2O = tRNA(Ala) + glycine + H(+). The catalysed reaction is a D-aminoacyl-tRNA + H2O = a tRNA + a D-alpha-amino acid + H(+). An aminoacyl-tRNA editing enzyme that deacylates mischarged D-aminoacyl-tRNAs. Also deacylates mischarged glycyl-tRNA(Ala), protecting cells against glycine mischarging by AlaRS. Acts via tRNA-based rather than protein-based catalysis; rejects L-amino acids rather than detecting D-amino acids in the active site. By recycling D-aminoacyl-tRNA to D-amino acids and free tRNA molecules, this enzyme counteracts the toxicity associated with the formation of D-aminoacyl-tRNA entities in vivo and helps enforce protein L-homochirality. The sequence is that of D-aminoacyl-tRNA deacylase from Streptococcus agalactiae serotype III (strain NEM316).